Here is a 296-residue protein sequence, read N- to C-terminus: tRNA dimethylallyltransferase (296 aa).

Gly2 to Thr9 serves as a coordination point for ATP. A substrate-binding site is contributed by Thr4–Thr9. 3 interaction with substrate tRNA regions span residues Asp27 to Leu30, Gln151 to Arg155, and Arg232 to Arg237.

It belongs to the IPP transferase family. In terms of assembly, monomer. The cofactor is Mg(2+).

It catalyses the reaction adenosine(37) in tRNA + dimethylallyl diphosphate = N(6)-dimethylallyladenosine(37) in tRNA + diphosphate. Catalyzes the transfer of a dimethylallyl group onto the adenine at position 37 in tRNAs that read codons beginning with uridine, leading to the formation of N6-(dimethylallyl)adenosine (i(6)A). The protein is tRNA dimethylallyltransferase of Shewanella sp. (strain ANA-3).